The chain runs to 248 residues: 5'-nucleotidase SurE (248 aa).

Residues aspartate 8, aspartate 9, serine 39, and asparagine 91 each contribute to the a divalent metal cation site.

This sequence belongs to the SurE nucleotidase family. The cofactor is a divalent metal cation.

It is found in the cytoplasm. The enzyme catalyses a ribonucleoside 5'-phosphate + H2O = a ribonucleoside + phosphate. In terms of biological role, nucleotidase that shows phosphatase activity on nucleoside 5'-monophosphates. The protein is 5'-nucleotidase SurE of Geotalea daltonii (strain DSM 22248 / JCM 15807 / FRC-32) (Geobacter daltonii).